Reading from the N-terminus, the 275-residue chain is 3-methyl-2-oxobutanoate hydroxymethyltransferase (275 aa).

Residues D49 and D88 each contribute to the Mg(2+) site. 3-methyl-2-oxobutanoate-binding positions include 49-50 (DS), D88, and K118. E120 serves as a coordination point for Mg(2+). The Proton acceptor role is filled by E187.

This sequence belongs to the PanB family. As to quaternary structure, homodecamer; pentamer of dimers. Requires Mg(2+) as cofactor.

It is found in the cytoplasm. The catalysed reaction is 3-methyl-2-oxobutanoate + (6R)-5,10-methylene-5,6,7,8-tetrahydrofolate + H2O = 2-dehydropantoate + (6S)-5,6,7,8-tetrahydrofolate. It participates in cofactor biosynthesis; (R)-pantothenate biosynthesis; (R)-pantoate from 3-methyl-2-oxobutanoate: step 1/2. Catalyzes the reversible reaction in which hydroxymethyl group from 5,10-methylenetetrahydrofolate is transferred onto alpha-ketoisovalerate to form ketopantoate. The sequence is that of 3-methyl-2-oxobutanoate hydroxymethyltransferase from Nitrobacter hamburgensis (strain DSM 10229 / NCIMB 13809 / X14).